A 508-amino-acid chain; its full sequence is Photosystem II CP47 reaction center protein (508 aa).

The next 6 membrane-spanning stretches (helical) occupy residues 21–36 (AVHI…WAGS), 101–115 (IVFS…IWHW), 140–156 (GIHL…FGTF), 203–218 (IAAG…FHLS), 237–252 (VLSS…AFVV), and 457–472 (SFAL…HGAR).

It belongs to the PsbB/PsbC family. PsbB subfamily. In terms of assembly, PSII is composed of 1 copy each of membrane proteins PsbA, PsbB, PsbC, PsbD, PsbE, PsbF, PsbH, PsbI, PsbJ, PsbK, PsbL, PsbM, PsbT, PsbX, PsbY, PsbZ, Psb30/Ycf12, at least 3 peripheral proteins of the oxygen-evolving complex and a large number of cofactors. It forms dimeric complexes. Requires Binds multiple chlorophylls. PSII binds additional chlorophylls, carotenoids and specific lipids. as cofactor.

Its subcellular location is the plastid. The protein resides in the chloroplast thylakoid membrane. Functionally, one of the components of the core complex of photosystem II (PSII). It binds chlorophyll and helps catalyze the primary light-induced photochemical processes of PSII. PSII is a light-driven water:plastoquinone oxidoreductase, using light energy to abstract electrons from H(2)O, generating O(2) and a proton gradient subsequently used for ATP formation. The protein is Photosystem II CP47 reaction center protein of Citrus sinensis (Sweet orange).